The chain runs to 467 residues: UDP-N-acetylmuramoylalanine--D-glutamate ligase (467 aa).

121-127 lines the ATP pocket; sequence GTNGKST.

It belongs to the MurCDEF family.

The protein resides in the cytoplasm. It catalyses the reaction UDP-N-acetyl-alpha-D-muramoyl-L-alanine + D-glutamate + ATP = UDP-N-acetyl-alpha-D-muramoyl-L-alanyl-D-glutamate + ADP + phosphate + H(+). Its pathway is cell wall biogenesis; peptidoglycan biosynthesis. In terms of biological role, cell wall formation. Catalyzes the addition of glutamate to the nucleotide precursor UDP-N-acetylmuramoyl-L-alanine (UMA). In Chelativorans sp. (strain BNC1), this protein is UDP-N-acetylmuramoylalanine--D-glutamate ligase.